The primary structure comprises 660 residues: Glutenin, high molecular weight subunit 12 (660 aa).

The signal sequence occupies residues 1–21 (MAKRLVLFAAVVIALVALTTA). Positions 127-136 (YYPSVTSPRQ) are enriched in polar residues. The interval 127-660 (YYPSVTSPRQ…EGGDALSASQ (534 aa)) is disordered. 4 stretches are compositionally biased toward low complexity: residues 141–166 (PGQA…QGQQ), 187–200 (QGYY…PGQG), 208–248 (QGYY…WQQG), and 255–275 (QQLG…GQQG). Residues 276 to 286 (HYPTSLQQPGQ) are compositionally biased toward polar residues. Positions 296–365 (QQQPAQGQQG…QQQPGQGQQG (70 aa)) are enriched in low complexity. Over residues 370-384 (SLQQPGQQGHYPTSL) the composition is skewed to polar residues. Composition is skewed to low complexity over residues 385 to 426 (QQLG…GQQG), 478 to 514 (PGQR…PGQG), 522 to 535 (QGYY…PGQG), and 551 to 577 (QQTG…GQQG). The segment covering 590 to 604 (QQSGQGQQSGQGHQP) has biased composition (gly residues).

This sequence belongs to the gliadin/glutenin family. Disulfide-bridge linked aggregates.

In terms of biological role, glutenins are high-molecular weight seed storage proteins of wheat endosperm. Thought to be responsible for the visco-elastic property of wheat dough. The chain is Glutenin, high molecular weight subunit 12 from Triticum aestivum (Wheat).